The primary structure comprises 29 residues: Kalata-B4 (29 aa).

A cross-link (cyclopeptide (Gly-Asp)) is located at residues 1 to 29 (GLPVCGETCVGGTCNTPGCTCSWPVCTRD). Disulfide bonds link cysteine 5/cysteine 19, cysteine 9/cysteine 21, and cysteine 14/cysteine 26.

Post-translationally, this is a cyclic peptide.

Its function is as follows. Probably participates in a plant defense mechanism. This is Kalata-B4 from Oldenlandia affinis.